Here is a 237-residue protein sequence, read N- to C-terminus: UPF0688 protein C1orf174 homolog (237 aa).

The interval 1–187 is disordered; that stretch reads MRSRKLAGGV…LLDDDSNQPM (187 aa). Low complexity predominate over residues 11–28; it reads RSSARLRARSCSAASASA. Residues 29-47 are compositionally biased toward polar residues; it reads QDTHVTTSAQTACQTPSSH. Residues 48 to 76 are compositionally biased toward basic and acidic residues; the sequence is KATDRRTSKKFKYDKGHIVKSELQKHRSD. Residue Ser183 is modified to Phosphoserine.

It belongs to the UPF0688 family.

It is found in the nucleus. In Bos taurus (Bovine), this protein is UPF0688 protein C1orf174 homolog.